We begin with the raw amino-acid sequence, 780 residues long: Striatin (780 aa).

The stretch at 53-120 forms a coiled coil; that stretch reads LHFLQHEWAR…QERAKYHKLK (68 aa). The segment at 55–63 is caveolin-binding; sequence FLQHEWARF. The segment at 124 to 145 is disordered; that stretch reads ELNQGDMKPPSYDSDEGNETEV. Ser-137 carries the post-translational modification Phosphoserine. The calmodulin-binding stretch occupies residues 149 to 166; that stretch reads QNSQFMWKQGRQLLRQYL. Position 225 is a phosphothreonine (Thr-225). Residues Ser-227, Ser-229, Ser-245, and Ser-259 each carry the phosphoserine modification. Disordered regions lie at residues 290-321, 334-353, and 363-388; these read FLVASEEGDNESRSAGDGTDWEKEDQCLTPER, EQYKKERKGKKGVKRPNRSK, and DVDELPSLQPSVGSPSRPSSSRLPEQ. Over residues 299–315 the composition is skewed to basic and acidic residues; that stretch reads NESRSAGDGTDWEKEDQ. The span at 338 to 351 shows a compositional bias: basic residues; the sequence is KERKGKKGVKRPNR. WD repeat units lie at residues 461-500, 514-553, 567-606, 662-701, 704-743, and 750-780; these read SHFDGIRALAFHPIEPVLITASEDHTLKMWNLQKTAPAKK, AHKGPVLCVVMSSNGEQCYSGGTDGLIQSWSTTNPNVDPY, GHTDAVWGLAYSAAHQRLLSCSADGTLRLWTTTEVAPALT, SSSCQINRVISHPTLPISITAHEDRHIKFYDNNTGKLIHS, AHLEAVTSLAVDPNGLYLMSGSHDCSIRLWNLESKTCIQE, and KFEESIHDVAFHPSKCYIASAGADALAKVFV.

It belongs to the WD repeat striatin family. As to quaternary structure, part of the core of STRIPAK complexes composed of PP2A catalytic and scaffolding subunits, the striatins (PP2A regulatory subunits), the striatin-associated proteins MOB4, STRIP1 and STRIP2, PDCD10 and members of the STE20 kinases, such as STK24 and STK26. Interacts with CTTNBP2; this interaction may regulate dendritic spine distribution of STRN. Activation of glutamate receptors weakens the interaction with CTTNBP2. As to expression, mainly expressed in the central nervous system. Mostly confined in dendrites, not in axons, and is most abundant in dendritic spines.

The protein resides in the cytoplasm. It is found in the membrane. It localises to the cell projection. The protein localises to the dendritic spine. Functionally, calmodulin-binding scaffolding protein which is the center of the striatin-interacting phosphatase and kinase (STRIPAK) complexes. STRIPAK complexes have critical roles in protein (de)phosphorylation and are regulators of multiple signaling pathways including Hippo, MAPK, nuclear receptor and cytoskeleton remodeling. Different types of STRIPAK complexes are involved in a variety of biological processes such as cell growth, differentiation, apoptosis, metabolism and immune regulation. The sequence is that of Striatin (Strn) from Rattus norvegicus (Rat).